The chain runs to 461 residues: Anthocyanidin 3-O-glucoside 5-O-glucosyltransferase (461 aa).

An N-terminal signal peptide occupies residues 1-15 (MSRAHVLLATFPAQG). The active-site Proton acceptor is the His-16. Position 16 (His-16) interacts with an anthocyanidin. Residues Gln-338, His-353, Trp-356, Asn-357, Ser-358, Glu-361, Asp-377, and Gln-378 each coordinate UDP-alpha-D-glucose.

Belongs to the UDP-glycosyltransferase family.

It carries out the reaction an anthocyanidin 3-O-beta-D-glucoside + UDP-alpha-D-glucose = an anthocyanidin 3,5-di-O-beta-D-glucoside + UDP + 2 H(+). Its pathway is pigment biosynthesis; anthocyanin biosynthesis. Its function is as follows. Catalyzes the glucosylation at the O-5 position of anthocyanidin 3-glucosides to form anthocyanidin 3,5-di-O-glucosides using UDP-glucose as sugar donor. Anthocyanidin 3,5-di-O-glucosides are molecules that are responsible for pigmentation. Also acts on anthocyanidin 3-O-(6-O-malonylglucoside). Much less active with hydroxycinnamoylglucose derivatives. No activity in the absence of the 3-O-glucoside group. The sequence is that of Anthocyanidin 3-O-glucoside 5-O-glucosyltransferase (HGT8) from Verbena hybrida (Garden vervain).